Here is a 334-residue protein sequence, read N- to C-terminus: Adenosine deaminase (334 aa).

Zn(2+) contacts are provided by His-16 and His-18. 3 residues coordinate substrate: His-18, Asp-20, and Gly-173. A Zn(2+)-binding site is contributed by His-200. The Proton donor role is filled by Glu-203. Zn(2+) is bound at residue Asp-281.

Belongs to the metallo-dependent hydrolases superfamily. Adenosine and AMP deaminases family. Adenosine deaminase subfamily. Requires Zn(2+) as cofactor.

It catalyses the reaction adenosine + H2O + H(+) = inosine + NH4(+). The catalysed reaction is 2'-deoxyadenosine + H2O + H(+) = 2'-deoxyinosine + NH4(+). In terms of biological role, catalyzes the hydrolytic deamination of adenosine and 2-deoxyadenosine. The polypeptide is Adenosine deaminase (Clostridium acetobutylicum (strain ATCC 824 / DSM 792 / JCM 1419 / IAM 19013 / LMG 5710 / NBRC 13948 / NRRL B-527 / VKM B-1787 / 2291 / W)).